A 191-amino-acid polypeptide reads, in one-letter code: Ankyrin repeat domain-containing protein 22 (191 aa).

ANK repeat units follow at residues 39–68 (NGDT…DVNL), 72–100 (KERT…MPVL), 101–130 (LIGY…EVNA), and 134–163 (DGYT…DPMI).

The sequence is that of Ankyrin repeat domain-containing protein 22 (Ankrd22) from Mus musculus (Mouse).